A 547-amino-acid polypeptide reads, in one-letter code: uncharacterized protein (547 aa).

The next 12 helical transmembrane spans lie at 33–53 (PTFF…IMVI), 107–127 (PLIV…GVIF), 145–165 (TGLI…LSFA), 203–223 (VYIL…FYLA), 231–251 (FIAI…FLLV), 263–283 (VAGI…LIYL), 298–318 (LNKI…ASFF), 351–371 (TLLT…FGLL), 397–417 (TVII…VAFG), 432–452 (LDLA…VATG), 470–490 (IVSL…FQAI), and 499–519 (VFIW…IAFG).

The protein resides in the cell membrane. This is an uncharacterized protein from Mycoplasma genitalium (strain ATCC 33530 / DSM 19775 / NCTC 10195 / G37) (Mycoplasmoides genitalium).